Consider the following 1123-residue polypeptide: Ubiquitin carboxyl-terminal hydrolase 36 (1123 aa).

2 stretches are compositionally biased toward basic and acidic residues: residues 1–19 (MPIV…KDSA) and 69–90 (GASR…EHTY). 2 disordered regions span residues 1-22 (MPIV…ADDG) and 67-95 (TEGA…SCGD). In terms of domain architecture, USP spans 122–423 (AGLHNLGNTC…QAYVLFYLRI (302 aa)). Cysteine 131 (nucleophile) is an active-site residue. Catalysis depends on histidine 382, which acts as the Proton acceptor. Serine 429 and serine 464 each carry phosphoserine. Residues 430-577 (PEGLISRTGS…RQGSWDSRDV (148 aa)) form a disordered region. Polar residues predominate over residues 491–503 (RNGSTLGLKSQNG). Residues 510–519 (PSGSPSPKLS) are compositionally biased toward low complexity. Residue serine 546 is modified to Phosphoserine. The span at 557–571 (SNSNSSRSGSQRQGS) shows a compositional bias: low complexity. Serine 582 bears the Phosphoserine mark. The segment at 589-999 (ATANGHGLKG…ESSSCAPSAN (411 aa)) is disordered. Residues 597-609 (KGNDESAGLDRRG) are compositionally biased toward basic and acidic residues. The span at 610–623 (SSSSSPEHSASSDS) shows a compositional bias: low complexity. Positions 640-654 (SQETNCSTAGHSKTP) are enriched in polar residues. Phosphoserine is present on serine 667. A compositionally biased stretch (polar residues) spans 669-681 (VLSNTTTEPASTM). Serine 682 is subject to Phosphoserine. The span at 687-697 (KKLALSAKKAS) shows a compositional bias: low complexity. Serine 713 and serine 742 each carry phosphoserine. The span at 773–785 (EPRSCSSISTALP) shows a compositional bias: polar residues. Positions 841 to 850 (HGKRKRKKKK) are enriched in basic residues. Residues 891-902 (GTQPQVNGQQVG) are compositionally biased toward polar residues. At serine 952 the chain carries Phosphoserine. The segment covering 963-975 (QETQRAVEEDGHL) has biased composition (basic and acidic residues).

It belongs to the peptidase C19 family. Interacts with isoform 3 of FBXW7; the interaction inhibits MYC degradation induced by SCF(FBW7) complex. Interacts with NTRK1; USP36 does not deubiquitinate NTRK1. Interacts with NEDD4L (via domains WW1, 3 and 4); the interaction inhibits ubiquitination of, at least, NTRK1, KCNQ2 and KCNQ3 by NEDD4L. Interacts (via C-terminus) with EXOSC10 (via C-terminus); the interaction is facilitated by the association with RNA and promotes sumoylation of EXOSC10. Post-translationally, polyubiquitinated by NEDD4L, no effect on USP36 protein levels. Both proteins interact with and regulate each other's ubiquitination levels. Broadly expressed.

It localises to the nucleus. The protein resides in the nucleolus. Its subcellular location is the cytoplasm. It catalyses the reaction Thiol-dependent hydrolysis of ester, thioester, amide, peptide and isopeptide bonds formed by the C-terminal Gly of ubiquitin (a 76-residue protein attached to proteins as an intracellular targeting signal).. Its function is as follows. Deubiquitinase essential for the regulation of nucleolar structure and function. Required for cell and organism viability. Plays an important role in ribosomal RNA processing and protein synthesis, which is mediated, at least in part, through deubiquitination of DHX33, NPM1 and FBL, regulating their protein stability. Functions as a transcriptional repressor by deubiquiting histone H2B at the promoters of genes critical for cellular differentiation, such as CDKN1A, thereby preventing histone H3 'Lys-4' trimethylation (H3K4). Specifically deubiquitinates MYC in the nucleolus, leading to prevent MYC degradation by the proteasome: acts by specifically interacting with isoform 3 of FBXW7 (FBW7gamma) in the nucleolus and counteracting ubiquitination of MYC by the SCF(FBW7) complex. In contrast, it does not interact with isoform 1 of FBXW7 (FBW7alpha) in the nucleoplasm. Interacts to and regulates the actions of E3 ubiquitin-protein ligase NEDD4L over substrates such as NTRK1, KCNQ2 and KCNQ3, affecting their expression an functions. Deubiquitinates SOD2, regulates SOD2 protein stability. Deubiquitinase activity is required to control selective autophagy activation by ubiquitinated proteins. Promotes CEP63 stabilization through 'Lys-48'-linked deubiquitination leading to increased stability. Acts as a SUMO ligase to promote EXOSC10 sumoylation critical for the nucleolar RNA exosome function in rRNA processing. Binds to pre-rRNAs. This Homo sapiens (Human) protein is Ubiquitin carboxyl-terminal hydrolase 36.